The primary structure comprises 145 residues: Ubiquitin-conjugating enzyme E2 variant 1C (145 aa).

Residues 12–145 (PRNFRLLEEL…LVQPPEGTFF (134 aa)) form the UBC core domain.

The protein belongs to the ubiquitin-conjugating enzyme family. As to quaternary structure, heterodimer with UBC35 or UBC36. Expressed in roots, shoots, leaves, stems and flowers, but not in pollen.

Functionally, has no ubiquitin ligase activity on its own. The heterodimer with UBC catalyzes the synthesis of non-canonical poly-ubiquitin chains that are linked through 'Lys-63'. This type of poly-ubiquitination does not lead to protein degradation by the proteasome. Mediates transcriptional activation of target genes. May play a role in the control of progress through the cell cycle and differentiation. May play a role in the error-free DNA repair pathway and contributes to the survival of cells after DNA damage. This Arabidopsis thaliana (Mouse-ear cress) protein is Ubiquitin-conjugating enzyme E2 variant 1C (UEV1C).